The sequence spans 124 residues: Fluoride-specific ion channel FluC 1 (124 aa).

4 helical membrane-spanning segments follow: residues 7–27, 35–55, 63–83, and 101–121; these read ALTLAAAGAGSVLRYLLGGWV, FPWGTLAVNALGCLGLGLLQG, LLLVLGSGLLAGFTTFSTLML, and IVGTLALGLFALSAGARAGAW.

The protein belongs to the fluoride channel Fluc/FEX (TC 1.A.43) family.

The protein localises to the cell membrane. It carries out the reaction fluoride(in) = fluoride(out). Functionally, fluoride-specific ion channel. Important for reducing fluoride concentration in the cell, thus reducing its toxicity. In Rubrobacter xylanophilus (strain DSM 9941 / JCM 11954 / NBRC 16129 / PRD-1), this protein is Fluoride-specific ion channel FluC 1.